The primary structure comprises 538 residues: Hydroxylamine reductase (538 aa).

4 residues coordinate [4Fe-4S] cluster: Cys-3, Cys-6, Cys-15, and Cys-21. Hybrid [4Fe-2O-2S] cluster-binding residues include His-239, Glu-263, Cys-307, Cys-394, Cys-422, Cys-447, Glu-481, and Lys-483. The residue at position 394 (Cys-394) is a Cysteine persulfide.

This sequence belongs to the HCP family. Requires [4Fe-4S] cluster as cofactor. It depends on hybrid [4Fe-2O-2S] cluster as a cofactor.

It is found in the cytoplasm. The catalysed reaction is A + NH4(+) + H2O = hydroxylamine + AH2 + H(+). Catalyzes the reduction of hydroxylamine to form NH(3) and H(2)O. This chain is Hydroxylamine reductase, found in Solidesulfovibrio magneticus (strain ATCC 700980 / DSM 13731 / RS-1) (Desulfovibrio magneticus).